A 637-amino-acid polypeptide reads, in one-letter code: Sodium-dependent phosphate transport protein 2A (637 aa).

Residues 1–103 lie on the Cytoplasmic side of the membrane; sequence MMSYSERLGG…LAQVGTKLLK (103 aa). A phosphoserine mark is found at Ser14 and Ser34. Residues 104–125 form a helical membrane-spanning segment; sequence VPLMLGFLYLFVCSLDVLSSAF. Topologically, residues 126–145 are extracellular; it reads QLAGGKVAGDIFKDNAILSN. A helical membrane pass occupies residues 146 to 163; it reads PVAGLVVGILVTVLVQSS. The Cytoplasmic segment spans residues 164-216; that stretch reads STSTSIIVSMVSSGLLEVSSAIPIIMGSNIGTSVTNTIVALMQAGDRTDFRRA. Residues 217-236 form a helical membrane-spanning segment; that stretch reads FAGATVHDCFNWLSVLVLLP. Disulfide bonds link Cys225-Cys520 and Cys306-Cys334. At 237–345 the chain is on the extracellular side; the sequence is LEAATGYLHH…HIFVDTGLPD (109 aa). Residues Asn298 and Asn328 are each glycosylated (N-linked (GlcNAc...) asparagine). Residues 346-368 form a helical membrane-spanning segment; it reads LAVGLILLAGSLVVLCTCLILLV. At 369-410 the chain is on the cytoplasmic side; sequence KMLNSLLKGQVANVIQKVINTDFPAPFTWVTGYFAMVVGASM. A helical membrane pass occupies residues 411 to 434; the sequence is TFVVQSSSVFTSAITPLIGLGVIS. Over 435 to 464 the chain is Extracellular; that stretch reads IERAYPLTLGSNIGTTTTAILAALASPREK. The helical transmembrane segment at 465–485 threads the bilayer; that stretch reads LSSSFQIALCHFFFNISGILL. The Cytoplasmic segment spans residues 486–511; the sequence is WYPLPCTRLPIRMAKALGKRTAKYRW. Thr506 bears the Phosphothreonine; by PKC mark. Residues 512–532 traverse the membrane as a helical segment; the sequence is FAVLYLLVCFLLLPSLVFGIS. The Extracellular segment spans residues 533 to 537; the sequence is MAGWQ. A helical membrane pass occupies residues 538–559; sequence AMVGVGTPFGALLAFVVLVNVL. Topologically, residues 560–637 are cytoplasmic; sequence QSRSPGHLPK…LPAHHNATRL (78 aa). A Phosphoserine modification is found at Ser605. A Phosphothreonine modification is found at Thr621. Ser623 is modified (phosphoserine).

The protein belongs to the SLC34A transporter family. As to quaternary structure, interacts via its C-terminal region with NHERF4. Interacts with NHERF1. Interacts with TMEM174; regulates SLC34A1 internalization by PTH and FGF23. In terms of tissue distribution, kidney.

It is found in the apical cell membrane. The protein localises to the cell membrane. It catalyses the reaction 3 Na(+)(out) + phosphate(out) = 3 Na(+)(in) + phosphate(in). With respect to regulation, transport activity is significantly increased in response to dietary phosphate deprivation. Functionally, involved in actively transporting phosphate into cells via Na(+) cotransport in the renal brush border membrane. The cotransport has a Na(+):Pi stoichiometry of 3:1 and is electrogenic. The sequence is that of Sodium-dependent phosphate transport protein 2A from Rattus norvegicus (Rat).